Consider the following 59-residue polypeptide: MENIIVTQVKSSIGVKKEHRLTLHALGLRKTGQQRKHKVSPELQGMLDSVRHLIKVEKA.

Belongs to the universal ribosomal protein uL30 family. As to quaternary structure, part of the 50S ribosomal subunit.

The protein is Large ribosomal subunit protein uL30 of Leptospira borgpetersenii serovar Hardjo-bovis (strain JB197).